A 194-amino-acid polypeptide reads, in one-letter code: Imidazoleglycerol-phosphate dehydratase (194 aa).

This sequence belongs to the imidazoleglycerol-phosphate dehydratase family.

It is found in the cytoplasm. The enzyme catalyses D-erythro-1-(imidazol-4-yl)glycerol 3-phosphate = 3-(imidazol-4-yl)-2-oxopropyl phosphate + H2O. It functions in the pathway amino-acid biosynthesis; L-histidine biosynthesis; L-histidine from 5-phospho-alpha-D-ribose 1-diphosphate: step 6/9. This Bacillus licheniformis (strain ATCC 14580 / DSM 13 / JCM 2505 / CCUG 7422 / NBRC 12200 / NCIMB 9375 / NCTC 10341 / NRRL NRS-1264 / Gibson 46) protein is Imidazoleglycerol-phosphate dehydratase.